We begin with the raw amino-acid sequence, 377 residues long: MVFAAIPSPSRGVVHLGPVPLRAYALMIIIGIVVAVVVTGRRLRARGMDPALAGEIAYWAVPFGIVGARIYHVLSTPDAYFGEHGHVADVVKIWNGGLGIWGAIAGGALGAWLAARRLGISLALFADAAAPGIILAQAIGRWGNWFNQELYGKPTTLPWAVRIDPAHRADPGVATYQPTFLYEFLWNLVVAAILLLVDRRHRLGRGRLFALYVALYTFGRLWIEMLRIDTADEILGLRVNIWTSAIVCVGAVVALLVVRRPVDPDVSPQEQRALGLVQDRTRRQPTDAAGETAGETRTATRHDDATDGVDVNGADVDGADPSNVNGANVNGADPVNVNVNDADGAGAGAGEQPVAGAENGAAAVSSGRTRVERPPAT.

A run of 4 helical transmembrane segments spans residues 18-38 (PVPLRAYALMIIIGIVVAVVV), 48-68 (MDPALAGEIAYWAVPFGIVGA), 93-113 (IWNGGLGIWGAIAGGALGAWL), and 119-139 (GISLALFADAAAPGIILAQAI). Arg-141 is a binding site for a 1,2-diacyl-sn-glycero-3-phospho-(1'-sn-glycerol). The next 3 helical transmembrane spans lie at 177–197 (QPTFLYEFLWNLVVAAILLLV), 208–228 (LFALYVALYTFGRLWIEMLRI), and 238–258 (RVNIWTSAIVCVGAVVALLVV). The disordered stretch occupies residues 265–377 (DVSPQEQRAL…RTRVERPPAT (113 aa)). Composition is skewed to low complexity over residues 288-297 (AAGETAGETR) and 308-344 (GVDVNGADVDGADPSNVNGANVNGADPVNVNVNDADG).

Belongs to the Lgt family.

Its subcellular location is the cell membrane. It catalyses the reaction L-cysteinyl-[prolipoprotein] + a 1,2-diacyl-sn-glycero-3-phospho-(1'-sn-glycerol) = an S-1,2-diacyl-sn-glyceryl-L-cysteinyl-[prolipoprotein] + sn-glycerol 1-phosphate + H(+). It participates in protein modification; lipoprotein biosynthesis (diacylglyceryl transfer). Functionally, catalyzes the transfer of the diacylglyceryl group from phosphatidylglycerol to the sulfhydryl group of the N-terminal cysteine of a prolipoprotein, the first step in the formation of mature lipoproteins. In Frankia alni (strain DSM 45986 / CECT 9034 / ACN14a), this protein is Phosphatidylglycerol--prolipoprotein diacylglyceryl transferase.